The primary structure comprises 267 residues: UPF0162 protein HI_1558 (267 aa).

Belongs to the UPF0162 family.

The polypeptide is UPF0162 protein HI_1558 (Haemophilus influenzae (strain ATCC 51907 / DSM 11121 / KW20 / Rd)).